The following is a 462-amino-acid chain: Retinoic acid receptor alpha (462 aa).

Residues 1-87 (MASNSSSCPT…PPPLPRIYKP (87 aa)) form a modulating region. A compositionally biased stretch (polar residues) spans 52 to 64 (GYSTPSPATIETQ). Residues 52 to 77 (GYSTPSPATIETQSSSSEEIVPSPPS) are disordered. Residue Ser77 is modified to Phosphoserine; by CDK7. 2 NR C4-type zinc fingers span residues 88–108 (CFVCQDKSSGYHYGVSACEGC) and 124–148 (CHRDKNCIINKVTRNRCQYCRLQKC). Residues 88 to 153 (CFVCQDKSSG…RLQKCFDVGM (66 aa)) constitute a DNA-binding region (nuclear receptor). Phosphoserine; by PKB/AKT1 is present on Ser96. A hinge region spans residues 154–182 (SKESVRNDRNKKKKEAPKPECSESYTLTP). Glycyl lysine isopeptide (Lys-Gly) (interchain with G-Cter in SUMO) cross-links involve residues Lys166 and Lys171. In terms of domain architecture, NR LBD spans 183 to 417 (EVGELIEKVR…PLIQEMLENS (235 aa)). Ser219 is subject to Phosphoserine; by PKA. Cys235 is an all-trans-retinoate binding site. A UBR5-degron motif is present at residues 254-258 (IADQI). Ser287 lines the all-trans-retinoate pocket. Lys347 is modified (N6,N6,N6-trimethyllysine). Position 369 is a phosphoserine; by PKA and RPS6KA5 (Ser369). Lys399 is covalently cross-linked (Glycyl lysine isopeptide (Lys-Gly) (interchain with G-Cter in SUMO)). The required for binding corepressor NCOR1 stretch occupies residues 404 to 419 (GSMPPLIQEMLENSEG). The 9aaTAD motif lies at 408-416 (PLIQEMLEN). The tract at residues 420–462 (LDTLSGQSGGGTRDGGGLAPPPGSCSPSLSPSSHRSSPATQSP) is disordered. The segment covering 426–437 (QSGGGTRDGGGL) has biased composition (gly residues). Low complexity predominate over residues 444–462 (CSPSLSPSSHRSSPATQSP).

It belongs to the nuclear hormone receptor family. NR1 subfamily. As to quaternary structure, heterodimer; with RXRA. Binds DNA preferentially as a heterodimer. RXRA serves as enhancer to induce RARA binding to RARE. Interacts with RXRG. Interacts with NCOA3 and NCOA6 coactivators, leading to a strong increase of transcription of target genes. Interacts with NCOA7; the interaction requires ligand-binding. Interacts (via the ligand-binding domain) with PRAME; interaction is direct and ligand (retinoic acid)-dependent. Interacts with PRKAR1A; the interaction negatively regulates RARA transcriptional activity. Interacts with NCOR1; the interaction occurs in the absence of ligand and represses transcriptional activity. Interacts with NCOR2. Interacts with PRMT2. Interacts with LRIF1. Interacts with ASXL1 and NCOA1. Interacts with ACTN4. Interacts with CDK7; the interaction is enhanced by interaction with GTF2H3. Interacts with GTF2H3; the interaction requires prior phosphorylation on Ser-369 which then enhances interaction with CDK7. In a complex with HDAC3, HDAC5 and HDAC7; the HDACs serve as corepressors of RARA, causing its deacetylation and inhibition of RARE DNA element binding; association with HDAC3, HDAC5 and HDAC7 is increased upon oscillatory shear stress. In the absence of hormonal ligand, interacts with TACC1. Phosphorylated on serine and threonine residues. Phosphorylation does not change during cell cycle. Phosphorylation on Ser-77 is crucial for the N-terminal AF1 transcriptional activity. Under stress conditions, MAPK8 enhances phosphorylation on Thr-181, Ser-445 and Ser-461 leading to RARA ubiquitination and degradation. Phosphorylation by AKT1 inhibits the transactivation activity. On retinoic acid stimulation, phosphorylation on Ser-369 by RPS6KA5 promotes interaction with GTF2H3 and the CDK7-mediated phosphorylation of Ser-77. In terms of processing, ubiquitinated by UBR5, leading to its degradation: UBR5 specifically recognizes and binds ligand-bound RARA when it is not associated with coactivators (NCOAs). In presence of NCOAs, the UBR5-degron is not accessible, preventing its ubiquitination and degradation. Post-translationally, sumoylated with SUMO2, mainly on Lys-399 which is also required for SENP6 binding. On all-trans retinoic acid (ATRA) binding, a conformational change may occur that allows sumoylation on two additional site, Lys-166 and Lys-171. Probably desumoylated by SENP6. Sumoylation levels determine nuclear localization and regulate ATRA-mediated transcriptional activity. Acetylated; acetylation is increased upon pulsatile shear stress and decreased upon oscillatory shear stress. As to expression, expressed in Sertoli cells and germ cells.

It is found in the nucleus. Its subcellular location is the cytoplasm. Its function is as follows. Receptor for retinoic acid. Retinoic acid receptors bind as heterodimers to their target response elements in response to their ligands, all-trans or 9-cis retinoic acid, and regulate gene expression in various biological processes. The RXR/RAR heterodimers bind to the retinoic acid response elements (RARE) composed of tandem 5'-AGGTCA-3' sites known as DR1-DR5. In the absence of ligand, the RXR-RAR heterodimers associate with a multiprotein complex containing transcription corepressors that induce histone deacetylation, chromatin condensation and transcriptional suppression. On ligand binding, the corepressors dissociate from the receptors and associate with the coactivators leading to transcriptional activation. Formation of heterocomplex with histone deacetylases might lead to inhibition of RARE DNA element binding and to transcriptional repression. Transcriptional activation and RARE DNA element binding might be supported by the transcription factor KLF2. RARA plays an essential role in the regulation of retinoic acid-induced germ cell development during spermatogenesis. Has a role in the survival of early spermatocytes at the beginning prophase of meiosis. In Sertoli cells, may promote the survival and development of early meiotic prophase spermatocytes. In concert with RARG, required for skeletal growth, matrix homeostasis and growth plate function. Together with RXRA, positively regulates microRNA-10a expression, thereby inhibiting the GATA6/VCAM1 signaling response to pulsatile shear stress in vascular endothelial cells. In association with HDAC3, HDAC5 and HDAC7 corepressors, plays a role in the repression of microRNA-10a and thereby promotes the inflammatory response. The sequence is that of Retinoic acid receptor alpha (Rara) from Mus musculus (Mouse).